The primary structure comprises 409 residues: Autophagy-related protein 21 (409 aa).

WD repeat units lie at residues 1–35 (MKVL…KCFE), 221–261 (VHKG…TLQS), 273–312 (TRPC…QQNK), and 361–402 (KVDD…GECI). The L/FRRG motif motif lies at 269-273 (FRRGT).

The protein belongs to the WD repeat PROPPIN family.

The protein resides in the cytoplasm. Its subcellular location is the membrane. The protein localises to the vacuole membrane. Functionally, required for cytoplasm to vacuole transport (Cvt) vesicles formation and mitophagy. Involved in binding of phosphatidylethanolamine to ATG8 and in recruitment of ATG8 and ATG5 to the pre-autophagosomal structure. Protects ATG8 from ARG4-mediated cleavage. The sequence is that of Autophagy-related protein 21 (ATG21) from Eremothecium gossypii (strain ATCC 10895 / CBS 109.51 / FGSC 9923 / NRRL Y-1056) (Yeast).